A 578-amino-acid polypeptide reads, in one-letter code: Isocitrate dehydrogenase kinase/phosphatase (578 aa).

ATP contacts are provided by residues 315 to 321 (APGIRGM) and Lys-336. Asp-371 is an active-site residue.

This sequence belongs to the AceK family.

The protein resides in the cytoplasm. It catalyses the reaction L-seryl-[isocitrate dehydrogenase] + ATP = O-phospho-L-seryl-[isocitrate dehydrogenase] + ADP + H(+). Bifunctional enzyme which can phosphorylate or dephosphorylate isocitrate dehydrogenase (IDH) on a specific serine residue. This is a regulatory mechanism which enables bacteria to bypass the Krebs cycle via the glyoxylate shunt in response to the source of carbon. When bacteria are grown on glucose, IDH is fully active and unphosphorylated, but when grown on acetate or ethanol, the activity of IDH declines drastically concomitant with its phosphorylation. This chain is Isocitrate dehydrogenase kinase/phosphatase, found in Escherichia coli O139:H28 (strain E24377A / ETEC).